A 45-amino-acid chain; its full sequence is U1-ctenitoxin-Pk1a (45 aa).

4 disulfide bridges follow: cysteine 3-cysteine 16, cysteine 10-cysteine 25, cysteine 15-cysteine 34, and cysteine 27-cysteine 32.

As to expression, expressed by the venom gland.

Its subcellular location is the secreted. In terms of biological role, neurotoxin. Causes rapid general flaccid paralysis and death in mice at dose levels of 5 ug per mouse. The chain is U1-ctenitoxin-Pk1a from Phoneutria keyserlingi (Brazilian wandering spider).